A 670-amino-acid chain; its full sequence is MSKVFTLNSDFKPAGDQPEAIRRLKEGLEDGLAHQTLLGVTGSGKTFTIANVIADLNRPTMMLAPNKTLAAQLYGEMKEFFPDNAVEYFVSYYDYYQPEAYVPSSDTFIEKDASVNEHIEQMRLSATKALLERRDVIVVASVSAIYGLGDPDLYLKMMLHLTQGMLIDQRAILRRLAELQYSRNDQAFQRGTFRVRGEVIDIFPAESDEIALRVELFDEEVERLSLFDPLTGHVLQTVPRYTIYPKTHYVTPRERILQAMEDIKVELADRRKVLLANDKLVEEQRLSQRTQFDLEMMNELGYCSGIENYSRYLSGRGPGEPPPTLFDYLPADGLLVIDESHVTVPQIGGMYRGDRARKETLVEYGFRLPSALDNRPMKFEEFEALAPQTIYVSATPGNYELEKSGGEVIDQVVRPTGLLDPLIEVRPVATQVDDLLSEIRQRAAVNERVLVTTLTKRMAEDLTEYLEEHGERVRYLHSDIDTVERVEIIRDLRLGEFDVLVGINLLREGLDMPEVSLVAILDADKEGFLRSERSLIQTIGRAARNLRGKAILYGDKITPSMAKAIGETERRREKQEAYNTEHGIVPQGLNKKISDILQLGQPTNRGKGRGNRKAAEPAARYELMTPKALELKIRELESKMLTHAQNLEFEEAAALRDELQALRAQFIAAS.

Residues 26–183 (EGLEDGLAHQ…RRLAELQYSR (158 aa)) form the Helicase ATP-binding domain. Residue 39–46 (GVTGSGKT) participates in ATP binding. A Beta-hairpin motif is present at residues 92–115 (YYDYYQPEAYVPSSDTFIEKDASV). Positions 431–597 (QVDDLLSEIR…GLNKKISDIL (167 aa)) constitute a Helicase C-terminal domain. The 36-residue stretch at 630–665 (ELKIRELESKMLTHAQNLEFEEAAALRDELQALRAQ) folds into the UVR domain.

This sequence belongs to the UvrB family. As to quaternary structure, forms a heterotetramer with UvrA during the search for lesions. Interacts with UvrC in an incision complex.

It localises to the cytoplasm. Functionally, the UvrABC repair system catalyzes the recognition and processing of DNA lesions. A damage recognition complex composed of 2 UvrA and 2 UvrB subunits scans DNA for abnormalities. Upon binding of the UvrA(2)B(2) complex to a putative damaged site, the DNA wraps around one UvrB monomer. DNA wrap is dependent on ATP binding by UvrB and probably causes local melting of the DNA helix, facilitating insertion of UvrB beta-hairpin between the DNA strands. Then UvrB probes one DNA strand for the presence of a lesion. If a lesion is found the UvrA subunits dissociate and the UvrB-DNA preincision complex is formed. This complex is subsequently bound by UvrC and the second UvrB is released. If no lesion is found, the DNA wraps around the other UvrB subunit that will check the other stand for damage. This Pectobacterium carotovorum subsp. carotovorum (strain PC1) protein is UvrABC system protein B.